The primary structure comprises 452 residues: Trigger factor (452 aa).

A PPIase FKBP-type domain is found at 171-256 (GDRVTISFKG…ATKVEAPQDT (86 aa)).

Belongs to the FKBP-type PPIase family. Tig subfamily.

The protein localises to the cytoplasm. The enzyme catalyses [protein]-peptidylproline (omega=180) = [protein]-peptidylproline (omega=0). In terms of biological role, involved in protein export. Acts as a chaperone by maintaining the newly synthesized protein in an open conformation. Functions as a peptidyl-prolyl cis-trans isomerase. This Rhodopseudomonas palustris (strain HaA2) protein is Trigger factor.